We begin with the raw amino-acid sequence, 94 residues long: NADH dehydrogenase [ubiquinone] iron-sulfur protein 3, mitochondrial (94 aa).

This sequence belongs to the complex I 30 kDa subunit family. Core subunit of respiratory chain NADH dehydrogenase (Complex I) which is composed of 45 different subunits. Interacts with NDUFAF3. Interacts with RAB5IF. Found in subcomplexes containing subunits NDUFS2, MT-ND1 and NDUFA13.

It localises to the mitochondrion inner membrane. It catalyses the reaction a ubiquinone + NADH + 5 H(+)(in) = a ubiquinol + NAD(+) + 4 H(+)(out). Functionally, core subunit of the mitochondrial membrane respiratory chain NADH dehydrogenase (Complex I) which catalyzes electron transfer from NADH through the respiratory chain, using ubiquinone as an electron acceptor. Essential for the catalytic activity and assembly of complex I. In Mesocricetus auratus (Golden hamster), this protein is NADH dehydrogenase [ubiquinone] iron-sulfur protein 3, mitochondrial.